The following is a 1507-amino-acid chain: Protein TIC 214 (1507 aa).

6 helical membrane passes run 4–24, 53–73, 81–101, 129–149, 163–183, and 202–222; these read IYLV…LPIG, TILL…VLAL, LWVK…IYLY, AFLE…NPVF, ISTF…IFFL, and LVKI…SFLC.

Belongs to the TIC214 family. As to quaternary structure, part of the Tic complex.

It localises to the plastid. Its subcellular location is the chloroplast inner membrane. Functionally, involved in protein precursor import into chloroplasts. May be part of an intermediate translocation complex acting as a protein-conducting channel at the inner envelope. The sequence is that of Protein TIC 214 from Staurastrum punctulatum (Green alga).